We begin with the raw amino-acid sequence, 404 residues long: Omega-3 fatty acid desaturase, chloroplastic (404 aa).

Residues Thr-28–Ala-50 form a disordered region. Residues His-121–His-125 carry the Histidine box-1 motif. Residues His-157–His-161 carry the Histidine box-2 motif. Residues His-324–His-328 carry the Histidine box-3 motif.

Belongs to the fatty acid desaturase type 1 family.

Its subcellular location is the plastid. The protein resides in the chloroplast membrane. Its pathway is lipid metabolism; polyunsaturated fatty acid biosynthesis. In terms of biological role, chloroplast omega-3 fatty acid desaturase introduces the third double bond in the biosynthesis of 16:3 and 18:3 fatty acids, important constituents of plant membranes. It is thought to use ferredoxin as an electron donor and to act on fatty acids esterified to galactolipids, sulfolipids and phosphatidylglycerol. In Brassica napus (Rape), this protein is Omega-3 fatty acid desaturase, chloroplastic (FAD7).